Consider the following 94-residue polypeptide: MKTLLLTLVVVTIVCLDLGDSLICYMGPKTPRTCPRGQNLCYTKTWCDAFCSSRGKVVELGCAATCPIAKSYEDVTCCSTDNCNPFPVRPRPHP.

The N-terminal stretch at 1–21 is a signal peptide; sequence MKTLLLTLVVVTIVCLDLGDS. 5 disulfide bridges follow: Cys-24–Cys-41, Cys-34–Cys-62, Cys-47–Cys-51, Cys-66–Cys-77, and Cys-78–Cys-83.

The protein belongs to the three-finger toxin family. Long-chain subfamily. Type II alpha-neurotoxin sub-subfamily. Expressed by the venom gland.

The protein localises to the secreted. Its function is as follows. Binds with high affinity to muscular (alpha-1/CHRNA1) and neuronal (alpha-7/CHRNA7) nicotinic acetylcholine receptor (nAChR) and inhibits acetylcholine from binding to the receptor, thereby impairing neuromuscular and neuronal transmission. The chain is Alpha-elapitoxin-Nss2a from Notechis scutatus scutatus (Mainland tiger snake).